The following is a 540-amino-acid chain: Zinc metalloproteinase nas-10 (540 aa).

The 208-residue stretch at 293–500 folds into the Peptidase M12A domain; that stretch reads ASIFFEQNLI…VEILNKMYCK (208 aa). Cystine bridges form between Cys-339–Cys-499, Cys-365–Cys-385, Cys-504–Cys-540, Cys-511–Cys-533, and Cys-520–Cys-537. His-394 contributes to the Zn(2+) binding site. Glu-395 is a catalytic residue. Residues His-398 and His-404 each coordinate Zn(2+). The ShKT domain maps to 504 to 540; sequence CDDKNVYCGAWALQDLCNNPNHNVWMRSNCRKSCNFC.

Zn(2+) serves as cofactor.

In terms of biological role, metalloprotease. The protein is Zinc metalloproteinase nas-10 of Caenorhabditis elegans.